The following is a 172-amino-acid chain: Small ribosomal subunit protein uS5 (172 aa).

Residues 16-79 (LKDRLVAINR…ESAKKNLVKV (64 aa)) form the S5 DRBM domain.

This sequence belongs to the universal ribosomal protein uS5 family. In terms of assembly, part of the 30S ribosomal subunit. Contacts proteins S4 and S8.

In terms of biological role, with S4 and S12 plays an important role in translational accuracy. Its function is as follows. Located at the back of the 30S subunit body where it stabilizes the conformation of the head with respect to the body. This chain is Small ribosomal subunit protein uS5, found in Bacteroides thetaiotaomicron (strain ATCC 29148 / DSM 2079 / JCM 5827 / CCUG 10774 / NCTC 10582 / VPI-5482 / E50).